A 463-amino-acid polypeptide reads, in one-letter code: Quinolone resistance protein NorB (463 aa).

The next 14 membrane-spanning stretches (helical) occupy residues 17-37, 53-73, 86-106, 107-127, 142-162, 165-185, 201-221, 230-250, 273-293, 299-319, 334-354, 357-377, 403-423, and 435-455; these read IGIVLSVITFWLFAQSLVNVV, IAVSITALFSGMFVVGAGGLA, IILNILGSLLIIISNIPLLLI, IGRLIQGLSAACIMPATLSII, YWSIGSWGGSGVCSFFGGAVA, LGWRWIFILSIIISLIALFLI, FDIKGLVLLVIMLLSLNILIT, SLLFITILAIAIVSFSLFIVL, TASNFLLNGVAGTLIVANTFV, YSSLQAGSLSITYLVMVLIMI, PMLIGTAVLIVGECLISLTFL, ILYVICCIIGYLFFGLGLGIY, MASALGGAFGVALSGAVYAIV, and IALWLNAGMGILSFVIILLLV.

It belongs to the major facilitator superfamily. TCR/Tet family.

It localises to the cell membrane. Functionally, multidrug efflux pump that acts independently of NorA and is one of the factors that confers resistance against diverse quinolones and chemical compounds. The polypeptide is Quinolone resistance protein NorB (norB) (Staphylococcus aureus (strain MRSA252)).